Here is a 484-residue protein sequence, read N- to C-terminus: Sodium/pantothenate symporter (484 aa).

Transmembrane regions (helical) follow at residues 3-23 (LGIILPLIIYLTFVFGAAIFA), 45-65 (GFVLAMTTASTYASASSFVGG), 74-94 (LGWVLLAMIQVPVVWLALGAL), 124-144 (VWLSSLALLLAFFAAMTVQFI), 162-182 (LLLFALTVGIYTFIGGFRAVV), 190-210 (TVMIFGTIILLIGTIYALGGV), 238-258 (FMASFWILVCFGVVGLPHTAV), 273-293 (MLIGTIVLSIIMLGMHLAGAL), 307-327 (VIPTLMIKVLPPIVAGIFLAA), 366-386 (VSYFSSIITLILTALLIFAAL), 397-417 (LFAFGGLEAAFLWVIVLGIYW), 424-444 (GALSSMIIGLGSYILLTQLGI), and 446-466 (LFNFHQIVPSLVFGLIAFLVG).

The protein belongs to the sodium:solute symporter (SSF) (TC 2.A.21) family.

It localises to the cell inner membrane. The catalysed reaction is (R)-pantothenate(in) + Na(+)(in) = (R)-pantothenate(out) + Na(+)(out). Functionally, catalyzes the sodium-dependent uptake of extracellular pantothenate. This Haemophilus influenzae (strain ATCC 51907 / DSM 11121 / KW20 / Rd) protein is Sodium/pantothenate symporter (panF).